Reading from the N-terminus, the 140-residue chain is Small ribosomal subunit protein uS11 (140 aa).

The tract at residues 116–140 (GRVEDVTPIPHDGTRPKGGRRGRRV) is disordered.

This sequence belongs to the universal ribosomal protein uS11 family. As to quaternary structure, part of the 30S ribosomal subunit.

Its function is as follows. Located on the platform of the 30S subunit. The chain is Small ribosomal subunit protein uS11 from Thermococcus kodakarensis (strain ATCC BAA-918 / JCM 12380 / KOD1) (Pyrococcus kodakaraensis (strain KOD1)).